The primary structure comprises 356 residues: UDP-N-acetylglucosamine--N-acetylmuramyl-(pentapeptide) pyrophosphoryl-undecaprenol N-acetylglucosamine transferase (356 aa).

UDP-N-acetyl-alpha-D-glucosamine contacts are provided by residues 12–14, asparagine 124, arginine 163, serine 188, isoleucine 242, and glutamine 287; that span reads TGG.

Belongs to the glycosyltransferase 28 family. MurG subfamily.

It is found in the cell inner membrane. It catalyses the reaction di-trans,octa-cis-undecaprenyl diphospho-N-acetyl-alpha-D-muramoyl-L-alanyl-D-glutamyl-meso-2,6-diaminopimeloyl-D-alanyl-D-alanine + UDP-N-acetyl-alpha-D-glucosamine = di-trans,octa-cis-undecaprenyl diphospho-[N-acetyl-alpha-D-glucosaminyl-(1-&gt;4)]-N-acetyl-alpha-D-muramoyl-L-alanyl-D-glutamyl-meso-2,6-diaminopimeloyl-D-alanyl-D-alanine + UDP + H(+). Its pathway is cell wall biogenesis; peptidoglycan biosynthesis. In terms of biological role, cell wall formation. Catalyzes the transfer of a GlcNAc subunit on undecaprenyl-pyrophosphoryl-MurNAc-pentapeptide (lipid intermediate I) to form undecaprenyl-pyrophosphoryl-MurNAc-(pentapeptide)GlcNAc (lipid intermediate II). The polypeptide is UDP-N-acetylglucosamine--N-acetylmuramyl-(pentapeptide) pyrophosphoryl-undecaprenol N-acetylglucosamine transferase (Pseudomonas syringae pv. syringae (strain B728a)).